We begin with the raw amino-acid sequence, 2286 residues long: MASHMKLYLFGDQTFDVQPHLQHLLQKRDNLFLHEFLNQSYNALRAELFKIPYSIRKDLPRFTCQEDLLLWDQSGPRCVALDMAMTTLYQLGTFISQAGISSYDAQNSRVVGLCTGAFAAAAVSCSSFTADLIPMAVSSVVAAFRTGLLVTDTARRVDPSQDLNRSWALLVPGQKAAKAFQEFWDANDGGVLTSMPYISAYAPNGITVSGPPQRLGDLAHWLASKSITSKAIPIYSAYHAPHLYSQKDARRIVDGLMLNKAVSPSEQIPLLSSTGSKPEERSFATLLEDAIAQALLHPLRWGSIFDDVQAALETTGSQQFSVQSIGSNAEHLIYTALKKTSLRYLVPETTVPSQPTSVPSVPDAGTSKPKLAIVAMSGRFPGAKDNEAYWDLLYKGLDVHKPVPSLRWDQQTHVDPTGAGKNTSATPFGCWLDDPSEFDARFFNISPREAPQIDPAQRLALMTAYEAIEQAGIVPDATPSTRPDRVGIFYGVTSNDWMETNSAQNIDTYYIPGGNRAFIPGRINYFFKFSGPSYAVDTACSSSLAGIHLACNALWQGDVDTAIAGGTNVLTNPDYHAGLDRGHFLSRTGNCKTFDDGADGYCRGEGVATIIIKRLDDAIAENDPILGVVLGAHTNHSAESESITRPHVGAQRVIFNKILNEAAVDPYSVSYVEMHGTGTQAGDATEMSSVLETFAPPVAEGKVARPESQKLYIGSAKANIGHGEAASGVCSVIKVLQMLKKDTIVPHCGIKNKINHRFPTDLEQRNVRIAMGPTQWKKGTEINPRRVFVNNFSAAGGNSALLIQDAPPRKQLIASNDSRIQFPIAITAKSGVSLQGNMRSMLKFLSTNSHVSLAELSYTTTARRIHHQHRVLIPGATSEEICSKIETALQNNTGVTRPKAAPKVVFTFTGQGAQYPGMGKQLFEENEFVRNELLSLDRIAQNLGFPSMLPFIQSDEPDVSKFAPSLVQLASVCLQITLSKLWASWGITPTAVVGHSLGEYAALNVAGVLSDTDTLFLVGGRAQLLEQKCTRGTHAMLVVKGSQEEITEALKGQEYETACINSPIETVLAGPNEQIAKVKEQLAAASFKTTLLKVPYAFHSSQLEPMVSDIEKLAGKVTFSDPKIPILCPLEGTVIENANPFNASYLARHSRQPVNMLTALTTAYRDGYLSDRSMVLEVGPHPAVSGMVKPTLGQQITCVASLQRRRAPWDMLSAALKSLYDAGASINWVDYQSNFPGAHTVVDLPAYSWDLKEYWIQYVNDWSLRKGDPPLVINNVSKLESTTIHSVVEESGDSEKTGIVVEADIARKDLSPLVQGHEVDGIPLCTPSVYADIALTLGKYLLERYQPQQKDDMVVVSDMTVSKALILRGDGSRHPIQAHAEADWSSQSVSIKFMSFDNKGNLQEHSACVVLFKDRSHQDALQSEALTTKQKMQNLRNQITTGESARFNRPMAYRMIRPLARFHDDYRAIDEVVLNSETLEASSKISFGTVKRDGDFHTHPAVIDALTQSCGFAMNCNDHTDIDVDVYMNHGWGSLELFEPLDFEKEYTTYTQMHAGEDKLWYGDVTIFDQDRVVAFFGQIAIQGVPRRVLKVILSIESGKKGQPQRQTQDKPRNTPSQTKDSTPKPAQNKPAAKVEPPKFSTAIRIISEESGIDVSDFTDGTTFADVGIDSLLGLTISARFQEELDIDLDFNALFFEHPTVKDLRAFLGADEDVSESSSSAASDSGRDTTTTGSATPELQEEFAESAEVEFERALEIISEESGVARSDLDDETNFADCGVDSLLSLVIASRFQDTFGLNIAHEQLFMECQTVGDLKTMLAREMGLATPASKPAAIPAPVVSEAVAQETVVTHSDTSNLAEREQAITELVNKYTAGFKAPTSNPNGPPLGKNESVVLVTGASGGLGSHLVYALAQLEEVHTVVCLNRPNREDPTTRQYKAMRDKGIRFPEHLKSKVRIFQTDTSKPKLGVADSEYASLIRSVTHIIHNAWPMSAKRPLSGFESQFQVFRNLLDLGRECASNRPADFKFSFQMISSIGVVGQWGLAAGQTGKIVVPEERTTIDSLLGNGYAEAKWGCERMLDETLHKFTDRFRPMVVRLGQIAGSKTSGYWNPMEHFGFLIKSSQTLNALPDVDGNLNWTPVNDIADTLTDLILSDRTPYPIYHIDNPIGQQWRDVNNILSDTLRIPNKVPFKEWLDMVRKAPQQDNPAALLADFLEDTYLRMACGGLVLDVKHSLEHSKSLSAVGPVSETVVRKYIHIWKEIGFLKTTAEDKAGFEAERLRLWGPRV.

The tract at residues 7–342 is N-terminal acylcarrier protein transacylase domain (SAT); it reads LYLFGDQTFD…IYTALKKTSL (336 aa). Positions 368–805 constitute a Ketosynthase family 3 (KS3) domain; that stretch reads KPKLAIVAMS…GGNSALLIQD (438 aa). Residues Cys540, His675, and His722 each act as for beta-ketoacyl synthase activity in the active site. The tract at residues 905-1195 is acyl/malonyl transferases; sequence VFTFTGQGAQ…GMVKPTLGQQ (291 aa). Ser996 acts as the For acyl/malonyl transferase activity in catalysis. Positions 1285-1417 are N-terminal hotdog fold; it reads HSVVEESGDS…CVVLFKDRSH (133 aa). Residues 1285–1591 form the PKS/mFAS DH domain; the sequence is HSVVEESGDS…IQGVPRRVLK (307 aa). A product template (PT) domainn region spans residues 1296-1588; the sequence is KTGIVVEADI…QIAIQGVPRR (293 aa). His1317 functions as the Proton acceptor; for dehydratase activity in the catalytic mechanism. A C-terminal hotdog fold region spans residues 1444–1591; that stretch reads SARFNRPMAY…IQGVPRRVLK (148 aa). Asp1504 serves as the catalytic Proton donor; for dehydratase activity. Residues 1600 to 1639 are disordered; the sequence is KKGQPQRQTQDKPRNTPSQTKDSTPKPAQNKPAAKVEPPK. In terms of domain architecture, Carrier 1 spans 1637–1712; sequence PPKFSTAIRI…DLRAFLGADE (76 aa). Ser1671 carries the post-translational modification O-(pantetheine 4'-phosphoryl)serine. Residues 1716–1735 form a disordered region; the sequence is ESSSSAASDSGRDTTTTGSA. The Carrier 2 domain occupies 1748–1823; sequence EVEFERALEI…DLKTMLAREM (76 aa). An O-(pantetheine 4'-phosphoryl)serine modification is found at Ser1782. Residues 1897 to 2145 are reductase (R) domain; sequence VTGASGGLGS…NWTPVNDIAD (249 aa).

Its pathway is polyketide biosynthesis. In terms of biological role, non-reducing polyketide synthase; part of the gene cluster that mediates the biosynthesis of fusarubins, highly pigmented naphthoquinones responsible for the coloration of the fruiting bodies. The non-reducing polyketide synthase FSR1 is responsible for the condensation of seven acetyl-CoA units to yield a haptaketide. After rings A and B are formed by aldol-type cyclization, the PKS-derived product is released as 6-O-demethylfusarubinaldehyde. Then, two hydroxyl groups at C-5 and C-10 are incorporated by FSR3, and simultaneously hydroxyl groups at C-6 and C-8 are methylated by FSR2. The aldehyde is, on the one hand, reduced by FSR3 to 8-O-methylfusarubin alcohol, which equilibrates mainly with 8-O-methylfusarubin and only small amounts of 8-O-methylnectriafurone. On the other hand, the aldehyde can be oxidized to form 8-O-methylfusarubinic acid, a reaction driven by FSR3 equilibrating with 8-O-methylfusarubinlactone, finally resulting in 8-O-methylanhydrofusarubinlactol after a further reduction step and loss of water. 8-O-Methylfusarubinic acid can also undergo decarboxylation, resulting in 8-O-methyl-13-hydroxynorjavanicin after another hydroxylation step at C-13. Both steps are most likely also accomplished by FSR3. No enzymatic function has been determined so far for either FSR4 and FSR5. Their deletion does not alter the product spectrum, but the possibility that they catalyze specific enzymatic steps during perithecium development cannot be ruled out. FSR4 might possess a regulatory function in the biosynthesis of fusarubins. The sequence is that of Non-reducing polyketide synthase fsr1 from Gibberella fujikuroi (strain CBS 195.34 / IMI 58289 / NRRL A-6831) (Bakanae and foot rot disease fungus).